Reading from the N-terminus, the 396-residue chain is Probable sugar efflux transporter (396 aa).

12 helical membrane passes run 15–35 (VLIMACAGFIFNTTEFVPVAM), 51–71 (GLMMTVYAWTVLIMSLPAMLA), 84–104 (LFIIFIVGHILSVIAWNFWIL), 109–129 (MCIALAHSVFWSITASLVMRI), 137–157 (QALGMLAIGTALATILGLPIG), 168–188 (VTFGIIAVLALSIMFLIIRLL), 209–229 (PLLLWLYVTTAIVISAHFTAY), 245–265 (NFATAVLLVFGFSGIAASLLF), 276–296 (FIVVSMSLLMFSLLLLLFSTE), 297–317 (TIIAMFSLVFIWGIGISCIGL), 333–353 (VATAIYSGIFNAGIGAGALFG), and 365–385 (IGYTGAALGLIGFIIFITTHL).

This sequence belongs to the major facilitator superfamily. SotB (TC 2.A.1.2) family.

The protein localises to the cell inner membrane. In terms of biological role, involved in the efflux of sugars. The physiological role may be the reduction of the intracellular concentration of toxic sugars or sugar metabolites. In Haemophilus influenzae (strain PittGG), this protein is Probable sugar efflux transporter.